Here is a 283-residue protein sequence, read N- to C-terminus: Cyclin-C (283 aa).

A Cyclin N-terminal domain is found at 46-144 (NVIQALGEHL…ILECEFYLLE (99 aa)). The interval 252–283 (TILSKMPKPKPPPNSEGEQGPNGSQNSSYSQS) is disordered. A compositionally biased stretch (polar residues) spans 272–283 (PNGSQNSSYSQS).

This sequence belongs to the cyclin family. Cyclin C subfamily. As to quaternary structure, component of the Mediator complex. The cylin/CDK pair formed by CCNC/CDK8 also associates with the large subunit of RNA polymerase II.

It is found in the nucleus. Component of the Mediator complex, a coactivator involved in regulated gene transcription of nearly all RNA polymerase II-dependent genes. Mediator functions as a bridge to convey information from gene-specific regulatory proteins to the basal RNA polymerase II transcription machinery. Mediator is recruited to promoters by direct interactions with regulatory proteins and serves as a scaffold for the assembly of a functional preinitiation complex with RNA polymerase II and the general transcription factors. Binds to and activates cyclin-dependent kinase CDK8 that phosphorylates the CTD (C-terminal domain) of the large subunit of RNA polymerase II (RNAp II), which may inhibit the formation of a transcription initiation complex. In Gallus gallus (Chicken), this protein is Cyclin-C (CCNC).